Here is a 496-residue protein sequence, read N- to C-terminus: Docking protein 3 (496 aa).

The disordered stretch occupies residues 18-38; sequence LSLDGGTGSGQKGKCEEFPSS. The PH domain occupies 63–179; it reads PIKDGILYQQ…WMGPICQLAF (117 aa). Position 194 is a phosphoserine (Ser-194). Positions 213-317 constitute an IRS-type PTB domain; it reads EVGEFPVVVQ…ARQRERLPEL (105 aa). The interval 313–363 is disordered; sequence RLPELTRPQPCPLPRATSLPSLDTPGELREMPPGPEPPTSRKMHLAEPGPQ. Phosphoserine occurs at positions 330 and 364. Tyr-381 bears the Phosphotyrosine mark. Residues 408–447 form a disordered region; it reads PTLHGGEPEPHEGPGSRSPTTSPIYHNGQDLSWPGPANDS. At Ser-425 the chain carries Phosphoserine.

It belongs to the DOK family. Type A subfamily. As to quaternary structure, on tyrosine phosphorylation, interacts with CSK and INPP5D/SHIP1 via their SH2 domains. Both Tyr-381 and Tyr-398 are required for interaction with INPP5D. Only Tyr-381 is required for interaction with CSK. Binds ABL1 through the PTB domain and in a kinase-dependent manner. Does not interact with RasGAP. Post-translationally, constitutively tyrosine-phosphorylated. On IL2 stimulation, phosphorylated on C-terminal tyrosine residues possibly by Src kinases. Can also be phosphorylated by ABL1 kinase. In terms of tissue distribution, expressed in spleen.

Its subcellular location is the cytoplasm. The protein localises to the cell membrane. DOK proteins are enzymatically inert adaptor or scaffolding proteins. They provide a docking platform for the assembly of multimolecular signaling complexes. DOK3 is a negative regulator of JNK signaling in B-cells through interaction with INPP5D/SHIP1. May modulate ABL1 function. In Homo sapiens (Human), this protein is Docking protein 3 (DOK3).